A 227-amino-acid polypeptide reads, in one-letter code: 2,3-bisphosphoglycerate-dependent phosphoglycerate mutase (227 aa).

Substrate-binding positions include 7 to 14, 20 to 21, Arg59, 86 to 89, Lys97, 113 to 114, and 182 to 183; these read RHGQSEWN, TG, ERHY, RR, and GN. His8 serves as the catalytic Tele-phosphohistidine intermediate. Glu86 functions as the Proton donor/acceptor in the catalytic mechanism.

It belongs to the phosphoglycerate mutase family. BPG-dependent PGAM subfamily. Homodimer.

It carries out the reaction (2R)-2-phosphoglycerate = (2R)-3-phosphoglycerate. It participates in carbohydrate degradation; glycolysis; pyruvate from D-glyceraldehyde 3-phosphate: step 3/5. In terms of biological role, catalyzes the interconversion of 2-phosphoglycerate and 3-phosphoglycerate. This is 2,3-bisphosphoglycerate-dependent phosphoglycerate mutase from Neisseria meningitidis serogroup C / serotype 2a (strain ATCC 700532 / DSM 15464 / FAM18).